Reading from the N-terminus, the 147-residue chain is Hemoglobin subunit beta (147 aa).

Val2 is modified (N-acetylvaline). Positions 3-147 (HLTPEEKSAV…VANALAHKYH (145 aa)) constitute a Globin domain. Thr13 carries the post-translational modification Phosphothreonine. Residue Ser45 is modified to Phosphoserine. Lys60 is modified (N6-acetyllysine). His64 contributes to the heme b binding site. At Lys83 the chain carries N6-acetyllysine. His93 provides a ligand contact to heme b. S-nitrosocysteine is present on Cys94. Position 145 is an N6-acetyllysine (Lys145).

The protein belongs to the globin family. As to quaternary structure, heterotetramer of two alpha chains and two beta chains. In terms of tissue distribution, red blood cells.

Involved in oxygen transport from the lung to the various peripheral tissues. The protein is Hemoglobin subunit beta (HBB) of Gorilla gorilla gorilla (Western lowland gorilla).